Reading from the N-terminus, the 385-residue chain is S-adenosylmethionine synthase (385 aa).

His-15 lines the ATP pocket. Residue Asp-17 coordinates Mg(2+). A K(+)-binding site is contributed by Glu-43. L-methionine contacts are provided by Glu-56 and Gln-99. A flexible loop region spans residues 99–109 (QSPDINKGINN). Residues 164 to 166 (DAK), 230 to 231 (RF), Asp-239, 245 to 246 (RK), Ala-262, and Lys-266 each bind ATP. L-methionine is bound at residue Asp-239. An L-methionine-binding site is contributed by Lys-270.

This sequence belongs to the AdoMet synthase family. As to quaternary structure, homotetramer; dimer of dimers. Requires Mg(2+) as cofactor. K(+) is required as a cofactor.

The protein localises to the cytoplasm. The catalysed reaction is L-methionine + ATP + H2O = S-adenosyl-L-methionine + phosphate + diphosphate. It functions in the pathway amino-acid biosynthesis; S-adenosyl-L-methionine biosynthesis; S-adenosyl-L-methionine from L-methionine: step 1/1. Functionally, catalyzes the formation of S-adenosylmethionine (AdoMet) from methionine and ATP. The overall synthetic reaction is composed of two sequential steps, AdoMet formation and the subsequent tripolyphosphate hydrolysis which occurs prior to release of AdoMet from the enzyme. The chain is S-adenosylmethionine synthase from Baumannia cicadellinicola subsp. Homalodisca coagulata.